The sequence spans 1283 residues: uncharacterized protein (1283 aa).

In terms of domain architecture, LDL-receptor class A spans 10-46 (ACPPNTFTCADGSCIPSDWKGDGEKDCEDGSDEEAVT). 2 disulfides stabilise this stretch: Cys11–Cys23 and Cys18–Cys36. The tract at residues 27-47 (DWKGDGEKDCEDGSDEEAVTG) is disordered. Positions 34–45 (KDCEDGSDEEAV) are enriched in acidic residues. Asn79 carries an N-linked (GlcNAc...) asparagine glycan. Residues 236–278 (STTLIVDETTESTSASAEDDDDDVLTTNTSEESTATTAHDEEV) are disordered. Positions 261 to 272 (TTNTSEESTATT) are enriched in low complexity. The stretch at 332–389 (YQKTLEKEKCAIRNATSKCEALISYNNNLDCAIVTMNDECEVDAQNLVVELQEEVNDL) forms a coiled coil. 2 disordered regions span residues 621-651 (ARPT…VASS) and 1005-1046 (SSST…PTDG). Residues 626 to 647 (VTMPPRAPTAKPLPIPSAPTPP) show a composition bias toward pro residues. Positions 1005-1015 (SSSTMVSTSSE) are enriched in low complexity. The span at 1016-1026 (SDSESAPEQET) shows a compositional bias: acidic residues. Residues 1027-1044 (EPTVPSTTETTESPSTPT) show a composition bias toward low complexity. Residues 1263 to 1283 (VQSSVSFHIILAALIPFFALF) form a helical membrane-spanning segment.

The protein resides in the membrane. This is an uncharacterized protein from Caenorhabditis elegans.